A 122-amino-acid polypeptide reads, in one-letter code: Large ribosomal subunit protein uL14 (122 aa).

It belongs to the universal ribosomal protein uL14 family. Part of the 50S ribosomal subunit. Forms a cluster with proteins L3 and L19. In the 70S ribosome, L14 and L19 interact and together make contacts with the 16S rRNA in bridges B5 and B8.

Binds to 23S rRNA. Forms part of two intersubunit bridges in the 70S ribosome. The protein is Large ribosomal subunit protein uL14 of Francisella tularensis subsp. holarctica (strain LVS).